Here is a 345-residue protein sequence, read N- to C-terminus: Low-density lipoprotein receptor class A domain-containing protein 3 (345 aa).

A signal peptide spans 1-17 (MWLLGPLCLLLSSAAES). The Extracellular segment spans residues 18 to 173 (QLLPGNNFTN…NQLVYYPSIT (156 aa)). The N-linked (GlcNAc...) asparagine glycan is linked to Asn-24. LDL-receptor class A domains follow at residues 28–65 (ECNI…KECP), 70–107 (KCGP…ENCT), and 112–148 (LCST…ESCE). Intrachain disulfides connect Cys-29/Cys-42, Cys-37/Cys-55, Cys-49/Cys-64, Cys-71/Cys-84, Cys-78/Cys-97, Cys-91/Cys-106, Cys-113/Cys-125, Cys-120/Cys-138, and Cys-132/Cys-147. Positions 30 to 57 (NIPGNFMCSNGRCIPGAWQCDGLPDCFD) are (Microbial infection) Interaction with Venezuelan equine encephalitis virus/VEEV spike proteins E1 and E2. A helical transmembrane segment spans residues 174–194 (YAIIGSSVIFVLVVALLALVL). Residues 195 to 345 (HHQRKRNNLM…SEPSQGTEEV (151 aa)) are Cytoplasmic-facing. 2 consecutive short sequence motifs (involved in ITCH interaction) follow at residues 256–259 (PPSY) and 275–278 (PPPY). The interval 270-345 (WYDLPPPPYS…SEPSQGTEEV (76 aa)) is disordered. Low complexity predominate over residues 295–313 (SRSGSANSASSQAASSLLS).

The protein belongs to the LDLR family. In terms of assembly, interacts with APP precursor C-terminus. Interacts directly with ITCH; this interaction promotes ITCH auto-ubiquitination leading to its degradation. Interacts directly with NEDD4; this interaction promotes NEDD4 auto-ubiquitination. Interacts directly with NEDD4L. (Microbial infection) Interacts (via domain LDL-receptor class A 1) with Venezuelan equine encephalitis virus/VEEV spike proteins E1 and E2. As to expression, expressed at high levels in brain, lung, skeletal muscle, and pancreas. Expressed at moderate levels in heart, placenta, and kidney but not detected in the liver.

The protein resides in the cell membrane. May influence APP processing, resulting in a decrease in sAPP-alpha production and increased amyloidogenic P3 peptide production. May regulate ITCH and NEDD4 E3 ligase activity and degradation. Functionally, (Microbial infection) Acts as a receptor for Venezuelan equine encephalitis virus. In Homo sapiens (Human), this protein is Low-density lipoprotein receptor class A domain-containing protein 3.